The chain runs to 5900 residues: Midasin (5900 aa).

The disordered stretch occupies residues 250-270 (GSSVKSKKGGEQQQEGEGEDE). 6 AAA-ATPase protomer regions span residues 278-583 (TNTV…LRKQ), 673-1012 (EKIS…ALNY), 1101-1346 (PIIP…IAGY), 1411-1721 (IVWT…MDKQ), 1840-2089 (RGMQ…HVLT), and 2167-2451 (LENI…EIYM). ATP contacts are provided by residues 302 to 309 (GVTGSGKT) and 689 to 696 (GETGTGKT). The interval 796–826 (QTTTNNTKENNNNNNNNNNNNNNNNNNKKRT) is disordered. A compositionally biased stretch (low complexity) spans 797–821 (TTTNNTKENNNNNNNNNNNNNNNNN). ATP contacts are provided by residues 1135–1142 (GPTSSGKT), 1438–1445 (GETGCSKT), 1852–1859 (GSPGVGKT), and 2184–2191 (GPTSTSKT). The tract at residues 2562-4965 (ESAIKSILCE…EGKGKKDVSD (2404 aa)) is linker. Residues 4932–5598 (GDDGEGGEGG…SVEEKKLTRE (667 aa)) form a disordered region. Residues 4984-5008 (KDEDEDEEKEEKDEDEGFDMQDDFE) are compositionally biased toward acidic residues. Residues 5009–5055 (GEMHDIKKDENKDEDKKDDPNNEKENDKEMGDLEKPEDNVVDEKLWD) are compositionally biased toward basic and acidic residues. A compositionally biased stretch (acidic residues) spans 5056 to 5076 (EQDVQDEEEQDEEGKGDETNS). A compositionally biased stretch (basic and acidic residues) spans 5079-5113 (MMAKQDGKDDNDDDKKDDDKKDDKKKKKEENGKPD). Acidic residues-rich tracts occupy residues 5114–5130 (ENEE…EDGK) and 5139–5156 (GASD…DDVI). Basic and acidic residues predominate over residues 5159 to 5173 (EQEKEENHGDPRGDD). Residues 5174-5199 (QMEIPEDLELEDPDEGKEDDEQQDGG) are compositionally biased toward acidic residues. The span at 5213–5224 (DVSKEEEKKKEL) shows a compositional bias: basic and acidic residues. Composition is skewed to acidic residues over residues 5225-5255 (DGDE…EDKE) and 5273-5286 (EGDE…EEDQ). A compositionally biased stretch (basic and acidic residues) spans 5297-5313 (ETPKDSEQPLGVKDKTG). Residues 5339 to 5349 (GMTQPTPSEND) show a composition bias toward polar residues. Residues 5410 to 5442 (SEPKEKAPKQDPNAKENENQDYEFIKDDEKLDK) show a composition bias toward basic and acidic residues. Residues 5448-5460 (QALAAATDTQLQD) show a composition bias toward low complexity. Over residues 5469–5487 (DQAEQEEDQMDIDEEDDMD) the composition is skewed to acidic residues. Basic and acidic residues-rich tracts occupy residues 5488–5536 (VDHK…KDQQ) and 5551–5570 (QFTK…KAVL). A compositionally biased stretch (acidic residues) spans 5571-5590 (DDGDDQEMEQDGDQDDEESV). One can recognise a VWFA domain in the interval 5696-5889 (QVLLAIDDTE…NIPSILSDTL (194 aa)).

The protein belongs to the midasin family. In terms of assembly, associates with pre-60S ribosomes in the nucleoplasm.

Its subcellular location is the nucleus. It localises to the nucleolus. The protein localises to the nucleoplasm. Its function is as follows. Nuclear chaperone required for maturation and nuclear export of pre-60S ribosome subunits. Functions at successive maturation steps to remove ribosomal factors at critical transition points, first driving the exit of early pre-60S particles from the nucleolus and then driving late pre-60S particles from the nucleus. In Dictyostelium discoideum (Social amoeba), this protein is Midasin (mdn1).